A 233-amino-acid polypeptide reads, in one-letter code: Ciliary microtubule inner protein 6 (233 aa).

Basic and acidic residues-rich tracts occupy residues 1–14 (MEGE…KTED) and 21–33 (AERK…EKSP). Positions 1–45 (MEGEEKQQQHKTEDDGIACVAERKVEIKNEKSPGKSTQHPKPCVD) are disordered. A mn region spans residues 127–159 (GIVPLTSLDVSGEHENNFVEYISFIHQYDARRT). Positions 192–233 (LLNTLESGSSEQPQKTDKGNSSGDKVTSPGLCQQNSQELLET) are disordered. Positions 195-233 (TLESGSSEQPQKTDKGNSSGDKVTSPGLCQQNSQELLET) are enriched in polar residues.

Its subcellular location is the cell projection. The protein localises to the cilium. This Mus musculus (Mouse) protein is Ciliary microtubule inner protein 6 (Cimip6).